Reading from the N-terminus, the 909-residue chain is Probable DNA-directed RNA polymerase subunit beta (909 aa).

This sequence belongs to the RNA polymerase beta chain family.

The catalysed reaction is RNA(n) + a ribonucleoside 5'-triphosphate = RNA(n+1) + diphosphate. Its function is as follows. Required for late and very late gene expression. May be a component of the novel RNA polymerase activity induced by baculovirus infection. This is Probable DNA-directed RNA polymerase subunit beta (LEF-8) from Lepidoptera (butterflies and moths).